Consider the following 59-residue polypeptide: Pycsar effector protein MePycTM (59 aa).

A helical membrane pass occupies residues 36–56 (VAVAIYLLGAAMLSSGAAVLA).

The protein resides in the cell membrane. In terms of biological role, pycsar (pyrimidine cyclase system for antiphage resistance) provides immunity against bacteriophage. The pyrimidine cyclase (PycC) synthesizes cyclic nucleotides in response to infection; these serve as specific second messenger signals. The signals activate the adjacent effector, leading to bacterial cell death and abortive phage infection. A clade D Pycsar system. The effector gene of a two-gene Pycsar system. Expression of this and adjacent uridylate cyclase MePycC (AC A0A1C5G2V9) probably confers resistance to bacteriophage. The genes are probably only expressed in response to bacteriophage infection. Probably only responds to cUMP (produced by its cognate NTP cyclase), acts by impairing membrane integrity. The chain is Pycsar effector protein MePycTM from Micromonospora echinofusca.